We begin with the raw amino-acid sequence, 177 residues long: uncharacterized protein (177 aa).

Composition is skewed to low complexity over residues 78–93 (NNNNNNNNTINNNTNN) and 120–130 (SDVNSNNNNGN). Positions 78–146 (NNNNNNNNTI…NKKLKKDGTN (69 aa)) are disordered. Residues 131 to 146 (HQKKKINKKLKKDGTN) show a composition bias toward basic residues.

This is an uncharacterized protein from Dictyostelium discoideum (Social amoeba).